Reading from the N-terminus, the 123-residue chain is Large ribosomal subunit protein uL24 (123 aa).

Belongs to the universal ribosomal protein uL24 family. Part of the 50S ribosomal subunit.

One of two assembly initiator proteins, it binds directly to the 5'-end of the 23S rRNA, where it nucleates assembly of the 50S subunit. In terms of biological role, one of the proteins that surrounds the polypeptide exit tunnel on the outside of the subunit. In Kineococcus radiotolerans (strain ATCC BAA-149 / DSM 14245 / SRS30216), this protein is Large ribosomal subunit protein uL24.